The sequence spans 180 residues: MANRLKEKYTNEVIPALTEKFNYTSVMAVPKVEKIVLNMGVGDAVSNAKNLEKAAAELALISGQKPLITKAKKSIAGFRLREGVAIGAKVTLRGERMYEFLDKLVSVSLPRVRDFHGVPTKSFDGRGNYTLGVKEQLIFPEISFDDVDKVRGLDIVIVTTANTDEESRELLKALGMPFAK.

It belongs to the universal ribosomal protein uL5 family. Part of the 50S ribosomal subunit; part of the 5S rRNA/L5/L18/L25 subcomplex. Contacts the 5S rRNA and the P site tRNA. Forms a bridge to the 30S subunit in the 70S ribosome.

In terms of biological role, this is one of the proteins that bind and probably mediate the attachment of the 5S RNA into the large ribosomal subunit, where it forms part of the central protuberance. In the 70S ribosome it contacts protein S13 of the 30S subunit (bridge B1b), connecting the 2 subunits; this bridge is implicated in subunit movement. Contacts the P site tRNA; the 5S rRNA and some of its associated proteins might help stabilize positioning of ribosome-bound tRNAs. The chain is Large ribosomal subunit protein uL5 from Streptococcus pyogenes serotype M49 (strain NZ131).